Consider the following 170-residue polypeptide: Cathelicidin antimicrobial peptide (170 aa).

A signal peptide spans 1–30 (MKTQRHGPSLGRWSLVLLLLGLVMPLAIVA). A propeptide spans 31 to 131 (QVLSYQEAVL…DISCDKDNRR (101 aa)) (cathelin-like domain (CLD)). 2 cysteine pairs are disulfide-bonded: C86–C97 and C108–C125. An active core region spans residues 150-162 (LKKIGQKIKDFWG).

The protein belongs to the cathelicidin family. Monomer, homodimer or homotrimer (in vitro). Oligomerizes as tetra- or hexamer in solution (in vitro). In terms of processing, proteolytically cleaved by proteinase PRTN3 into antibacterial peptide LL-37. Proteolytically cleaved by cathepsin CTSG and neutrophil elastase ELANE. Resistant to proteolytic degradation in solution, and when bound to both zwitterionic (mimicking mammalian membranes) and negatively charged membranes (mimicking bacterial membranes). Post-translationally, after secretion onto the skin surface, the CAMP gene product is processed by a serine protease-dependent mechanism into multiple novel antimicrobial peptides distinct from and shorter than cathelicidin LL-37. These peptides show enhanced antimicrobial action, acquiring the ability to kill skin pathogens such as S.aureus, E.coli and C.albicans. These peptides have lost the ability to stimulate CXCL8/IL8 release from keratinocytes. The peptides act synergistically, killing bacteria at lower concentrations when present together, and maintain activity at increased salt condition.

It is found in the secreted. Its subcellular location is the vesicle. Functionally, antimicrobial protein that is an integral component of the innate immune system. Binds to bacterial lipopolysaccharides (LPS). Acts via neutrophil N-formyl peptide receptors to enhance the release of CXCL2. Postsecretory processing generates multiple cathelicidin antimicrobial peptides with various lengths which act as a topical antimicrobial defense in sweat on skin. The unprocessed precursor form, cathelicidin antimicrobial peptide, inhibits the growth of Gram-negative E.coli and E.aerogenes with efficiencies comparable to that of the mature peptide LL-37 (in vitro). In terms of biological role, antimicrobial peptide that is an integral component of the innate immune system. Binds to bacterial lipopolysaccharides (LPS). Causes membrane permeabilization by forming transmembrane pores (in vitro). Causes lysis of E.coli. Exhibits antimicrobial activity against Gram-negative bacteria such as P.aeruginosa, S.typhimurium, E.aerogenes, E.coli and P.syringae, Gram-positive bacteria such as L.monocytogenes, S.epidermidis, S.pyogenes and S.aureus, as well as vancomycin-resistant enterococci (in vitro). Exhibits antimicrobial activity against methicillin-resistant S.aureus, P.mirabilis, and C.albicans in low-salt media, but not in media containing 100 mM NaCl (in vitro). Forms chiral supramolecular assemblies with quinolone signal (PQS) molecules of P.aeruginosa, which may lead to interference of bacterial quorum signaling and perturbance of bacterial biofilm formation. May form supramolecular fiber-like assemblies on bacterial membranes. Induces cytokine and chemokine producation as well as TNF/TNFA and CSF2/GMCSF production in normal human keratinocytes. Exhibits hemolytic activity against red blood cells. Its function is as follows. Exhibits antimicrobial activity against E.coli and B.megaterium (in vitro). The sequence is that of Cathelicidin antimicrobial peptide from Trachypithecus cristatus (Silvered leaf-monkey).